The following is a 772-amino-acid chain: Metabotropic glutamate receptor-like protein G (772 aa).

The first 23 residues, 1 to 23 (MKKIIFLVLFLIFIFKDIKSSYG), serve as a signal peptide directing secretion. The Extracellular segment spans residues 24–391 (VDLVNFKMIT…TQVKFSPSIQ (368 aa)). Asn-73, Asn-126, Asn-262, Asn-313, Asn-343, and Asn-378 each carry an N-linked (GlcNAc...) asparagine glycan. A helical transmembrane segment spans residues 392–412 (IGVSIVSGVLIAIVLLSMVGV). Over 413–426 (YKYRASSSIRSASP) the chain is Cytoplasmic. Residues 427–447 (IFLIFILFGALIVFGGIILWV) form a helical membrane-spanning segment. Topologically, residues 448–463 (SELNDHVCNGRLWMVT) are extracellular. The helical transmembrane segment at 464 to 484 (LGFSTLIGSLVVKNFRIWLIF) threads the bilayer. The Cytoplasmic segment spans residues 485 to 500 (DNPELKTVKITNYQLY). A helical membrane pass occupies residues 501-521 (PWVACCLVINIILMSILTSLG). The Extracellular portion of the chain corresponds to 522-551 (DLREVDATGIDSLGKYEFLKICKMNNSGAS). Asn-546 carries N-linked (GlcNAc...) asparagine glycosylation. The helical transmembrane segment at 552–572 (VLYTILAYFGALLLTGVFVSW) threads the bilayer. Residues 573–586 (KIRIVDIEEFNESR) are Cytoplasmic-facing. The chain crosses the membrane as a helical span at residues 587 to 607 (AIAHTLYAISFCLFVIVPLMI). Residues 608–616 (SPLEKQSET) are Extracellular-facing. A helical transmembrane segment spans residues 617 to 637 (IILSVAGLFITTAAVLIIFLP). Residues 638–772 (KFYRVYEYGE…QIEPDEKNQD (135 aa)) lie on the Cytoplasmic side of the membrane. Residues 664-772 (TARAESHKSS…QIEPDEKNQD (109 aa)) are disordered. Over residues 718–728 (FTEESVSEIDE) the composition is skewed to acidic residues. The span at 740-753 (PEINQSEQQNSEIE) shows a compositional bias: low complexity. The segment covering 754–763 (QPPPPPPPQQ) has biased composition (pro residues).

This sequence in the N-terminal section; belongs to the BMP lipoprotein family. It in the C-terminal section; belongs to the G-protein coupled receptor 3 family. GABA-B receptor subfamily.

It localises to the membrane. The chain is Metabotropic glutamate receptor-like protein G (grlG) from Dictyostelium discoideum (Social amoeba).